The following is a 103-amino-acid chain: NADH-quinone oxidoreductase subunit K (103 aa).

A run of 3 helical transmembrane segments spans residues 5–25, 30–50, and 66–86; these read ISSYLMVALILFCVGLYGALT, VVVLLSIELMLNAVNINLVAF, and LFTMTVAAAEVAVGLAILIAL.

This sequence belongs to the complex I subunit 4L family. In terms of assembly, NDH-1 is composed of 14 different subunits. Subunits NuoA, H, J, K, L, M, N constitute the membrane sector of the complex.

It localises to the cell membrane. The enzyme catalyses a quinone + NADH + 5 H(+)(in) = a quinol + NAD(+) + 4 H(+)(out). Its function is as follows. NDH-1 shuttles electrons from NADH, via FMN and iron-sulfur (Fe-S) centers, to quinones in the respiratory chain. The immediate electron acceptor for the enzyme in this species is believed to be a menaquinone. Couples the redox reaction to proton translocation (for every two electrons transferred, four hydrogen ions are translocated across the cytoplasmic membrane), and thus conserves the redox energy in a proton gradient. The polypeptide is NADH-quinone oxidoreductase subunit K (Brevibacillus brevis (strain 47 / JCM 6285 / NBRC 100599)).